Consider the following 154-residue polypeptide: UPF0178 protein YaiI (154 aa).

It belongs to the UPF0178 family.

This is UPF0178 protein YaiI from Escherichia fergusonii (strain ATCC 35469 / DSM 13698 / CCUG 18766 / IAM 14443 / JCM 21226 / LMG 7866 / NBRC 102419 / NCTC 12128 / CDC 0568-73).